Here is a 326-residue protein sequence, read N- to C-terminus: Peroxidase 41 (326 aa).

The first 20 residues, Met-1–Ser-20, serve as a signal peptide directing secretion. The N-linked (GlcNAc...) asparagine glycan is linked to Asn-25. 4 cysteine pairs are disulfide-bonded: Cys-35-Cys-116, Cys-68-Cys-73, Cys-122-Cys-318, and Cys-201-Cys-228. The active-site Proton acceptor is the His-66. Residues Asp-67, Gly-72, Asp-74, and Ser-76 each contribute to the Ca(2+) site. Pro-164 lines the substrate pocket. N-linked (GlcNAc...) asparagine glycosylation is present at Asn-167. His-194 provides a ligand contact to heme b. Thr-195 contacts Ca(2+). The N-linked (GlcNAc...) asparagine glycan is linked to Asn-234. Residues Asp-242, Thr-245, and Asp-250 each coordinate Ca(2+). An N-linked (GlcNAc...) asparagine glycan is attached at Asn-286.

This sequence belongs to the peroxidase family. Classical plant (class III) peroxidase subfamily. The cofactor is heme b. Ca(2+) is required as a cofactor.

The protein resides in the secreted. It catalyses the reaction 2 a phenolic donor + H2O2 = 2 a phenolic radical donor + 2 H2O. Removal of H(2)O(2), oxidation of toxic reductants, biosynthesis and degradation of lignin, suberization, auxin catabolism, response to environmental stresses such as wounding, pathogen attack and oxidative stress. These functions might be dependent on each isozyme/isoform in each plant tissue. The protein is Peroxidase 41 (PER41) of Arabidopsis thaliana (Mouse-ear cress).